A 457-amino-acid polypeptide reads, in one-letter code: Multidrug resistance protein MdtK (457 aa).

12 helical membrane-spanning segments follow: residues 11-31 (LLALAIPVILAQIAQTAMGFV), 53-73 (IWLPAILFGHGLLLALTPVIA), 93-113 (WLAGFVSVLIMLVLWNAGYII), 127-147 (AVGYLRALLWGAPGYLFFQVA), 160-180 (GMVMGFIGLLVNIPVNYIFIY), 189-209 (GGVGCGVATAAVYWVMFLAMV), 243-263 (LPIALALFFEVTLFAVVALLV), 276-296 (IALNFSSLMFVLPMSLAAAVT), 314-334 (AARTGLMVGVCMATLTAIFTV), 350-370 (VVTLAAHLMLLAAVYQISDSI), 387-407 (IFYITFTAYWVLGLPSGYILA), and 418-438 (PAGFWIGFIIGLTSAAIMMML).

The protein belongs to the multi antimicrobial extrusion (MATE) (TC 2.A.66.1) family. MdtK subfamily.

Its subcellular location is the cell inner membrane. Functionally, multidrug efflux pump that functions probably as a Na(+)/drug antiporter. This Escherichia coli O9:H4 (strain HS) protein is Multidrug resistance protein MdtK.